A 341-amino-acid chain; its full sequence is DNA-directed RNA polymerase subunit alpha (341 aa).

Residues 1–223 form an alpha N-terminal domain (alpha-NTD) region; it reads MEQKRPQLKA…DELSVFGNVE (223 aa). The interval 268-341 is alpha C-terminal domain (alpha-CTD); the sequence is PQPFPTDQDT…LAQFGLALRD (74 aa).

The protein belongs to the RNA polymerase alpha chain family. Homodimer. The RNAP catalytic core consists of 2 alpha, 1 beta, 1 beta' and 1 omega subunit. When a sigma factor is associated with the core the holoenzyme is formed, which can initiate transcription.

It carries out the reaction RNA(n) + a ribonucleoside 5'-triphosphate = RNA(n+1) + diphosphate. DNA-dependent RNA polymerase catalyzes the transcription of DNA into RNA using the four ribonucleoside triphosphates as substrates. This is DNA-directed RNA polymerase subunit alpha from Deinococcus radiodurans (strain ATCC 13939 / DSM 20539 / JCM 16871 / CCUG 27074 / LMG 4051 / NBRC 15346 / NCIMB 9279 / VKM B-1422 / R1).